Here is a 272-residue protein sequence, read N- to C-terminus: Phosphatidylglycerol--prolipoprotein diacylglyceryl transferase (272 aa).

A run of 4 helical transmembrane segments spans residues W24–A44, Y59–Y79, F102–F122, and G129–F149. R151 lines the a 1,2-diacyl-sn-glycero-3-phospho-(1'-sn-glycerol) pocket. 3 helical membrane-spanning segments follow: residues P180–W200, G208–W228, and M244–A264.

Belongs to the Lgt family.

Its subcellular location is the cell inner membrane. It catalyses the reaction L-cysteinyl-[prolipoprotein] + a 1,2-diacyl-sn-glycero-3-phospho-(1'-sn-glycerol) = an S-1,2-diacyl-sn-glyceryl-L-cysteinyl-[prolipoprotein] + sn-glycerol 1-phosphate + H(+). It participates in protein modification; lipoprotein biosynthesis (diacylglyceryl transfer). In terms of biological role, catalyzes the transfer of the diacylglyceryl group from phosphatidylglycerol to the sulfhydryl group of the N-terminal cysteine of a prolipoprotein, the first step in the formation of mature lipoproteins. The chain is Phosphatidylglycerol--prolipoprotein diacylglyceryl transferase from Wolinella succinogenes (strain ATCC 29543 / DSM 1740 / CCUG 13145 / JCM 31913 / LMG 7466 / NCTC 11488 / FDC 602W) (Vibrio succinogenes).